The following is a 43-amino-acid chain: Protein PsbN (43 aa).

The chain crosses the membrane as a helical span at residues 5–27; the sequence is ALVAISISRLLVSFTGYALYTAF.

It belongs to the PsbN family.

It is found in the plastid. Its subcellular location is the chloroplast thylakoid membrane. In terms of biological role, may play a role in photosystem I and II biogenesis. The sequence is that of Protein PsbN from Bowenia serrulata (Byfield fern).